A 123-amino-acid chain; its full sequence is uncharacterized protein (123 aa).

2 disordered regions span residues 1–21 and 82–123; these read MGAPGGKINRPRTELKKKLFK and EKTA…EDES.

This is an uncharacterized protein from Homo sapiens (Human).